The sequence spans 156 residues: ATP synthase subunit b (156 aa).

Residues 11–31 (AIAFILFVWFCMKYVWPPLMA) traverse the membrane as a helical segment.

This sequence belongs to the ATPase B chain family. In terms of assembly, F-type ATPases have 2 components, F(1) - the catalytic core - and F(0) - the membrane proton channel. F(1) has five subunits: alpha(3), beta(3), gamma(1), delta(1), epsilon(1). F(0) has three main subunits: a(1), b(2) and c(10-14). The alpha and beta chains form an alternating ring which encloses part of the gamma chain. F(1) is attached to F(0) by a central stalk formed by the gamma and epsilon chains, while a peripheral stalk is formed by the delta and b chains.

The protein resides in the cell inner membrane. In terms of biological role, f(1)F(0) ATP synthase produces ATP from ADP in the presence of a proton or sodium gradient. F-type ATPases consist of two structural domains, F(1) containing the extramembraneous catalytic core and F(0) containing the membrane proton channel, linked together by a central stalk and a peripheral stalk. During catalysis, ATP synthesis in the catalytic domain of F(1) is coupled via a rotary mechanism of the central stalk subunits to proton translocation. Component of the F(0) channel, it forms part of the peripheral stalk, linking F(1) to F(0). The sequence is that of ATP synthase subunit b from Salmonella agona (strain SL483).